Reading from the N-terminus, the 82-residue chain is Small ribosomal subunit protein uS17 (82 aa).

The protein belongs to the universal ribosomal protein uS17 family. As to quaternary structure, part of the 30S ribosomal subunit.

Its function is as follows. One of the primary rRNA binding proteins, it binds specifically to the 5'-end of 16S ribosomal RNA. This chain is Small ribosomal subunit protein uS17, found in Shewanella piezotolerans (strain WP3 / JCM 13877).